The sequence spans 360 residues: Histidinol-phosphate aminotransferase (360 aa).

Lysine 223 carries the N6-(pyridoxal phosphate)lysine modification.

It belongs to the class-II pyridoxal-phosphate-dependent aminotransferase family. Histidinol-phosphate aminotransferase subfamily. Homodimer. It depends on pyridoxal 5'-phosphate as a cofactor.

It carries out the reaction L-histidinol phosphate + 2-oxoglutarate = 3-(imidazol-4-yl)-2-oxopropyl phosphate + L-glutamate. Its pathway is amino-acid biosynthesis; L-histidine biosynthesis; L-histidine from 5-phospho-alpha-D-ribose 1-diphosphate: step 7/9. The sequence is that of Histidinol-phosphate aminotransferase from Bacillus subtilis subsp. natto.